Here is a 291-residue protein sequence, read N- to C-terminus: Segregation and condensation protein A (291 aa).

The protein belongs to the ScpA family. As to quaternary structure, component of a cohesin-like complex composed of ScpA, ScpB and the Smc homodimer, in which ScpA and ScpB bind to the head domain of Smc. The presence of the three proteins is required for the association of the complex with DNA.

It localises to the cytoplasm. Functionally, participates in chromosomal partition during cell division. May act via the formation of a condensin-like complex containing Smc and ScpB that pull DNA away from mid-cell into both cell halves. The polypeptide is Segregation and condensation protein A (Malacoplasma penetrans (strain HF-2) (Mycoplasma penetrans)).